A 125-amino-acid chain; its full sequence is UPF0102 protein CCNA_00142 (125 aa).

This sequence belongs to the UPF0102 family.

In Caulobacter vibrioides (strain NA1000 / CB15N) (Caulobacter crescentus), this protein is UPF0102 protein CCNA_00142.